The chain runs to 540 residues: Arylsulfatase K (540 aa).

The N-terminal stretch at 1 to 22 (MLLLWVSVVAASALAAPAPGAD) is a signal peptide. The Ca(2+) site is built by aspartate 44 and cysteine 84. The Nucleophile role is filled by cysteine 84. 3-oxoalanine (Cys) is present on cysteine 84. A glycan (N-linked (GlcNAc...) asparagine) is linked at asparagine 112. Lysine 132 is a substrate binding site. N-linked (GlcNAc...) asparagine glycosylation is present at asparagine 197. Position 255 (histidine 255) interacts with substrate. Asparagine 266 carries N-linked (GlcNAc...) asparagine glycosylation. Positions 317 and 318 each coordinate Ca(2+). N-linked (GlcNAc...) asparagine glycans are attached at residues asparagine 379, asparagine 417, and asparagine 502.

The protein belongs to the sulfatase family. The cofactor is Ca(2+). In terms of processing, the conversion to 3-oxoalanine (also known as C-formylglycine, FGly), of a serine or cysteine residue in prokaryotes and of a cysteine residue in eukaryotes, is critical for catalytic activity. Post-translationally, the 75-kDa precursor undergoes proteolytic processing to yield a 23 kDa form. N-glycosylated with both high mannose and complex type sugars.

The protein resides in the secreted. Its subcellular location is the lysosome. It catalyses the reaction an aryl sulfate + H2O = a phenol + sulfate + H(+). The enzyme catalyses Hydrolysis of the 2-sulfate groups of the 2-O-sulfo-D-glucuronate residues of chondroitin sulfate, heparin and heparitin sulfate.. Catalyzes the hydrolysis of pseudosubstrates such as p-nitrocatechol sulfate and p-nitrophenyl sulfate. Catalyzes the hydrolysis of the 2-sulfate groups of the 2-O-sulfo-D-glucuronate residues of chondroitin sulfate, heparin and heparitin sulfate. Acts selectively on 2-sulfoglucuronate and lacks activity against 2-sulfoiduronate. The polypeptide is Arylsulfatase K (ARSK) (Bos taurus (Bovine)).